The chain runs to 311 residues: Olfactory receptor 2Y1 (311 aa).

Over 1 to 25 (MGSFNTSFEDGFILVGFSDWPQLEP) the chain is Extracellular. N5 is a glycosylation site (N-linked (GlcNAc...) asparagine). The helical transmembrane segment at 26–49 (ILFVFIFIFYSLTLFGNTIIIALS) threads the bilayer. At 50-57 (WLDLRLHT) the chain is on the cytoplasmic side. Residues 58-79 (PMYFFLSHLSLLDLCFTTSTVP) form a helical membrane-spanning segment. Residues 80–100 (QLLINLCGVDRTITRGGCVAQ) lie on the Extracellular side of the membrane. C97 and C188 are joined by a disulfide. The chain crosses the membrane as a helical span at residues 101–120 (LFIYLALGSTECVLLVVMAF). Residues 121–139 (DRYAAVCRPLHYMAIMHPH) lie on the Cytoplasmic side of the membrane. A helical transmembrane segment spans residues 140–158 (LCQTLAIASWGAGFVNSLI). Residues 159–194 (QTGLAMAMPLCGHRLNHFFCEMPVFLKLACADTEGT) are Extracellular-facing. Residues 195 to 218 (EAKMFVARVIVVAVPAALILGSYV) traverse the membrane as a helical segment. Residues 219 to 235 (HIAHAVLRVKSTAGRRK) lie on the Cytoplasmic side of the membrane. Residues 236-258 (AFGTCGSHLLVVFLFYGSAIYTY) form a helical membrane-spanning segment. Over 259–271 (LQSIHNYSEREGK) the chain is Extracellular. N-linked (GlcNAc...) asparagine glycosylation occurs at N264. A helical transmembrane segment spans residues 272 to 291 (FVALFYTIITPILNPLIYTL). At 292 to 311 (RNKDVKGALWKVLWRGRDSG) the chain is on the cytoplasmic side.

This sequence belongs to the G-protein coupled receptor 1 family.

It is found in the cell membrane. Its function is as follows. Odorant receptor. This is Olfactory receptor 2Y1 (OR2Y1) from Homo sapiens (Human).